A 606-amino-acid chain; its full sequence is CDPK-related kinase 8 (606 aa).

Polar residues predominate over residues 1–14; sequence MGGCTSKPSTSSGR. The segment at 1 to 132 is disordered; it reads MGGCTSKPST…TEVPQREEEE (132 aa). Gly2 is lipidated: N-myristoyl glycine. Over residues 98–110 the composition is skewed to basic residues; that stretch reads KHIRAALRRRKGK. Residues 150 to 412 form the Protein kinase domain; that stretch reads VELGEEIGRG…ASQALMHPWI (263 aa). ATP is bound by residues 156-164 and Lys182; that span reads IGRGHFGYT. Asp278 (proton acceptor) is an active-site residue. Ser318 carries the phosphoserine modification. An autoinhibitory domain region spans residues 418–448; sequence DMNIPFDILIFRQMKAYLRSSSLRKAALRAL. Residues 437 to 457 are calmodulin binding (CaMBD); it reads SSSLRKAALRALSKTLIKDEI. EF-hand domains lie at 455-491, 492-527, 528-567, and 570-599; these read DEIL…ATEA, MKES…VHQH, ESLD…GPSI, and HSVL…VSVR. Residues Asn470, Asp472, Glu516, Asp545, Asn547, Asn549, Glu556, Asp581, and Lys583 each coordinate Ca(2+). Ser585 bears the Phosphoserine mark.

This sequence belongs to the protein kinase superfamily. Ser/Thr protein kinase family. CDPK subfamily. In terms of assembly, binds calmodulin (CaM) in a calcium-dependent manner. Autophosphorylated.

The protein localises to the membrane. It carries out the reaction L-seryl-[protein] + ATP = O-phospho-L-seryl-[protein] + ADP + H(+). The catalysed reaction is L-threonyl-[protein] + ATP = O-phospho-L-threonyl-[protein] + ADP + H(+). With respect to regulation, activated by calcium and calmodulin. Autophosphorylation may play an important role in the regulation of the kinase activity. Its function is as follows. May play a role in signal transduction pathways that involve calcium as a second messenger. This is CDPK-related kinase 8 (CRK8) from Arabidopsis thaliana (Mouse-ear cress).